The sequence spans 88 residues: Phage-like element PBSX protein XkdR (88 aa).

The protein to B.subtilis YqbR.

The polypeptide is Phage-like element PBSX protein XkdR (xkdR) (Bacillus subtilis (strain 168)).